Reading from the N-terminus, the 179-residue chain is Large ribosomal subunit protein uL5 (179 aa).

The protein belongs to the universal ribosomal protein uL5 family. In terms of assembly, part of the 50S ribosomal subunit; part of the 5S rRNA/L5/L18/L25 subcomplex. Contacts the 5S rRNA and the P site tRNA. Forms a bridge to the 30S subunit in the 70S ribosome.

Its function is as follows. This is one of the proteins that bind and probably mediate the attachment of the 5S RNA into the large ribosomal subunit, where it forms part of the central protuberance. In the 70S ribosome it contacts protein S13 of the 30S subunit (bridge B1b), connecting the 2 subunits; this bridge is implicated in subunit movement. Contacts the P site tRNA; the 5S rRNA and some of its associated proteins might help stabilize positioning of ribosome-bound tRNAs. The chain is Large ribosomal subunit protein uL5 from Pectobacterium carotovorum subsp. carotovorum (strain PC1).